A 252-amino-acid polypeptide reads, in one-letter code: Delta-like protein dsl-1 (252 aa).

The signal sequence occupies residues 1-17 (MLKYLIFLAILISVVHS). In terms of domain architecture, DSL spans 120–164 (IKCNRYWHGLHCDHFCNDDFARTINRRCTQNGTLGCLEGFHGPNC). 6 cysteine pairs are disulfide-bonded: Cys122/Cys131, Cys135/Cys147, Cys155/Cys164, Cys173/Cys181, Cys175/Cys197, and Cys199/Cys209. An EGF-like domain is found at 169–210 (PADSCKCQNGGKCVSSLENTWAQNGSLICECRLGHFEGKHCE).

May interact with lin-12/Notch receptor.

Its subcellular location is the secreted. Functionally, probable secreted Notch ligand involved in the mediation of Notch signaling. Involved in the lin-12/Notch pathway-mediated signaling of cell fate in vulval precursor cells (VPCs), acting redundantly with lag-2, apx-1 and osm-11. May also be involved in glp-1/Notch signaling. This Caenorhabditis elegans protein is Delta-like protein dsl-1.